The following is a 209-amino-acid chain: Pyroglutamyl-peptidase 1 (209 aa).

Active-site residues include E85, C149, and H168.

It belongs to the peptidase C15 family. In terms of assembly, monomer.

It is found in the cytoplasm. The catalysed reaction is Release of an N-terminal pyroglutamyl group from a polypeptide, the second amino acid generally not being Pro.. Removes 5-oxoproline from various penultimate amino acid residues except L-proline. In Mus musculus (Mouse), this protein is Pyroglutamyl-peptidase 1 (Pgpep1).